The primary structure comprises 289 residues: Digeranylgeranylglyceryl phosphate synthase (289 aa).

The next 8 helical transmembrane spans lie at 18–38 (LMAGFAAAIGTLIAFNILISG), 47–67 (AFPFLDAGLVFLVVFLVSGAG), 99–119 (FYFSYLLFALGTLIAFSINSI), 120–140 (CGSIALFNSLLLILYAKTLKG), 163–183 (IFGFGGIKALSVLFLLAALAI), 218–238 (LAVLTGLLAVILSPLPYFMSV), 243–263 (YIYLVSLADLGFLAAIIQLLV), and 269–289 (KSSKLFKIAMFFALIAFIAGV).

This sequence belongs to the UbiA prenyltransferase family. DGGGP synthase subfamily. Requires Mg(2+) as cofactor.

It is found in the cell membrane. The enzyme catalyses sn-3-O-(geranylgeranyl)glycerol 1-phosphate + (2E,6E,10E)-geranylgeranyl diphosphate = 2,3-bis-O-(geranylgeranyl)-sn-glycerol 1-phosphate + diphosphate. Its pathway is membrane lipid metabolism; glycerophospholipid metabolism. Its function is as follows. Prenyltransferase that catalyzes the transfer of the geranylgeranyl moiety of geranylgeranyl diphosphate (GGPP) to the C2 hydroxyl of (S)-3-O-geranylgeranylglyceryl phosphate (GGGP). This reaction is the second ether-bond-formation step in the biosynthesis of archaeal membrane lipids. The polypeptide is Digeranylgeranylglyceryl phosphate synthase (Methanosarcina mazei (strain ATCC BAA-159 / DSM 3647 / Goe1 / Go1 / JCM 11833 / OCM 88) (Methanosarcina frisia)).